Consider the following 80-residue polypeptide: Large ribosomal subunit protein uL24 (80 aa).

Belongs to the universal ribosomal protein uL24 family. Part of the 50S ribosomal subunit.

Its function is as follows. One of two assembly initiator proteins, it binds directly to the 5'-end of the 23S rRNA, where it nucleates assembly of the 50S subunit. Functionally, one of the proteins that surrounds the polypeptide exit tunnel on the outside of the subunit. In Chlorobium phaeobacteroides (strain BS1), this protein is Large ribosomal subunit protein uL24.